The primary structure comprises 981 residues: MKYNTGAGTVPEQLNVHLVPHSHDDVGWLKTVDQYYVGSENYIQEACVENVLDSVVMSLQRDPNRKFVFGEMAFFHRWWLEQTPETKELXXKLVKAGQLEFVNGGWCMHDEATTHYIDMIDHTTLGHRFLQEQFNKIPRAGWQIDPFGHSAVQGYLLGAELGFDSVHFARIDYQDREKRKGEKSLEVVWRGSKTFGSSAQIFANAFPGHYGPPNGFNFEVRNNFVPLQDDPRLFDTNVEERVQNFLDAALTQAKLTRTNHLMWTMGDDFQYQYAESWFKQMDKLLHHVNKDGRVNALYSTPSLYTEAKNAANQTWPLKIDDYFPYADGRNAYWTGFYTSRXXXXXXXXMLSGYYLATRHSGFFAGKKSTKYHAFDLADALGIAQHHDAVSGTAKQHTTNDYAKRLALGASKAEAVVSSSLACLTSKQSADQCSAPASAFSQCHLFNISYCPPTESSLPDDKSLVVVVYNPLGWSRNEIVRIPVNDANLVVKDSSGNKLEVQYVEMDDVTANLRSFYVKXXXXXXXXXXXXYWSLFKASVPPLGWSTYFISEATGKGTRNALTLSQKGETLNIGPGDLKMSFSSLTGQLKRMYNSKTGVDLPIQQNYLWYESSEGDFSDYQASGAYLFRPNGQPPPHTVSRSSVTRVTRGPLVDEVHQKFNSWISQVTRLYKDKDHAEIEFTIGPIPTDDGVGKEVITRMTSTMATNKEFYTDSNGRDFLKRVRDYREDWPLEVTQPVAGNYYPLNLGLYTKDEKSEFSVLVDRATGGASIKDGEVELMLHRRTLRDDGRGVGEPLDEQVCMNKEYTCEGLTVRGNYYLSIHKPAGGSRWRRTTGQEIYSPMLLAFTQENMENWKSSHSTKAYAMDPNYSLPPSVALITLEELDDGLVLLRLAHLYEPSEDAEYSTLTKVELKKLFATQKLEELREVSLSANQEKSEMKKMKWSVEGDNEQEPQAVRGGPVSNADFVVELGPMEIRTFLLQF.

Zn(2+) contacts are provided by H23, D25, and D145. The active-site Nucleophile is D145. N312 is a glycosylation site (N-linked (GlcNAc...) asparagine). H386 contributes to the Zn(2+) binding site. Disulfide bonds link C422/C432, C442/C450, and C800/C807. The N-linked (GlcNAc...) asparagine glycan is linked to N446. The disordered stretch occupies residues 938-957 (KKMKWSVEGDNEQEPQAVRG).

It belongs to the glycosyl hydrolase 38 family. Dimer of dimers of heavy and light subunits. The cofactor is Zn(2+). Post-translationally, produced as a precursor which is then proteolytically cleaved into a 66kD heavy subunit and a 44kD light subunit. Cleavage probably occurs in protein bodies/protein storage vacuoles.

The protein localises to the protein storage vacuole. The catalysed reaction is Hydrolysis of terminal, non-reducing alpha-D-mannose residues in alpha-D-mannosides.. Inhibited by 2,3,4,6-tetra-O-acetyl-5-fluoro-beta-L-gulopyranosyl fluoride which acts as a slow substrate, doubling as a competitive inhibitor as it forms a high steady state concentration of glycosyl-enzyme intermediate that blocks the active site. Inhibited by 2,3,4,6-tetra-O-acetyl-5-fluoro-alpha-D-mannopyranosyl fluoride which also acts as a slow substrate but no intermediates accumulate. Inhibited by EDTA. Inhibited by metal ion Cu(2+). Inhibited by metal ions Fe(2+), Cd(2+) and Co(2+). Inhibited by metal ions Ag(+) and Hg(2+). Competitively inhibited by mannono-1-4-lactone and mannono-1-5-lactone. Inhibited by swainsonine but not by 1-desoxymannojirimycin. Inhibited by pyrrolidine-3,4-diol derivatives. Liberates mannose from p-nitrophenyl-alpha-D-mannoside. Liberates mannose from further alpha-D-mannosides including methyl-, benzyl-alpha-D-mannoside, 1-6-linked di-, tri- and tetrasaccharides of alpha-D-mannose and mannosyl-rhamnose. Liberates mannose from various glycoproteins like ovalbumin and ovomucoid. Does not hydrolyze beta-D-mannosides. Has glycosyltransferase activity, forming disaccharides from mannose and lyxose but not from glucose, galactose, ribose, xylose or arabinose. The protein is Alpha-mannosidase of Canavalia ensiformis (Jack bean).